Here is a 273-residue protein sequence, read N- to C-terminus: Ribosomal RNA small subunit methyltransferase A (273 aa).

Residues Asn18, Leu20, Gly45, Glu66, Asp91, and Asn113 each contribute to the S-adenosyl-L-methionine site.

The protein belongs to the class I-like SAM-binding methyltransferase superfamily. rRNA adenine N(6)-methyltransferase family. RsmA subfamily.

The protein resides in the cytoplasm. It catalyses the reaction adenosine(1518)/adenosine(1519) in 16S rRNA + 4 S-adenosyl-L-methionine = N(6)-dimethyladenosine(1518)/N(6)-dimethyladenosine(1519) in 16S rRNA + 4 S-adenosyl-L-homocysteine + 4 H(+). Its function is as follows. Specifically dimethylates two adjacent adenosines (A1518 and A1519) in the loop of a conserved hairpin near the 3'-end of 16S rRNA in the 30S particle. May play a critical role in biogenesis of 30S subunits. In Escherichia coli O157:H7, this protein is Ribosomal RNA small subunit methyltransferase A.